Here is a 629-residue protein sequence, read N- to C-terminus: tRNA uridine 5-carboxymethylaminomethyl modification enzyme MnmG (629 aa).

Residues 13–18 (GGGHAG), Val125, and Ser180 each bind FAD. Position 273-287 (273-287 (GPRYCPSIEDKVMRF)) interacts with NAD(+). Residue Gln370 coordinates FAD.

This sequence belongs to the MnmG family. In terms of assembly, homodimer. Heterotetramer of two MnmE and two MnmG subunits. It depends on FAD as a cofactor.

The protein resides in the cytoplasm. Functionally, NAD-binding protein involved in the addition of a carboxymethylaminomethyl (cmnm) group at the wobble position (U34) of certain tRNAs, forming tRNA-cmnm(5)s(2)U34. The protein is tRNA uridine 5-carboxymethylaminomethyl modification enzyme MnmG of Citrobacter koseri (strain ATCC BAA-895 / CDC 4225-83 / SGSC4696).